The following is a 244-amino-acid chain: Thiol S-methyltransferase TMT1B (244 aa).

Positions 1 to 23 (MDALVLFLQLLVLLLTLPLHLLA) are cleaved as a signal peptide.

Belongs to the methyltransferase superfamily.

Its subcellular location is the endoplasmic reticulum membrane. The protein resides in the lipid droplet. It localises to the microsome. The protein localises to the cytoplasm. It is found in the cytosol. The enzyme catalyses a thiol + S-adenosyl-L-methionine = a methyl thioether + S-adenosyl-L-homocysteine + H(+). Functionally, thiol S-methyltransferase that catalyzes the transfer of a methyl group from S-adenosyl-L-methionine to alkyl and phenolic thiol-containing acceptor substrates. Together with TMT1B accounts for most of S-thiol methylation activity in the endoplasmic reticulum of hepatocytes. Selectively methylates S-centered nucleophiles from metabolites such as hydrogen sulfide and dithiothreitol. The protein is Thiol S-methyltransferase TMT1B of Mus musculus (Mouse).